The following is a 436-amino-acid chain: MSMFLDTAKIQVKAGNGGDGMVAFRREKYVPNGGPWGGDGGRGGNVVFVVDEGLRTLMDFRYNRHFKAQSGEKGMTKGMHGRGAEDLIVRVPQGTTVRDAETGKVLTDLVENGQEFIVARGGRGGRGNIRFATPKNPAPEISENGEPGQERELLLELKVLADVGLVGFPSVGKSTLLSVITAAKPKIGAYHFTTIVPNLGMVRTQSGESFAVADLPGLIEGASQGVGLGTQFLRHIERTRVILHVIDMSASEGRDPYEDYLAINKELESYNLRLMERPQIIVANKMDMPDSAENLKVFKEKLAANYDEFAELPQIFPISSLTKQGLATLLDATAELLDKTPEFLLYDESEMEEEAYYGFDEEAPAFEISRDDDATWVLSGDKLEKLFNMTNFDRDEAVMKFARQLRGMGVDEALRARGAKDGDLVRIGKFEFEFVD.

In terms of domain architecture, Obg spans 2 to 160 (SMFLDTAKIQ…RELLLELKVL (159 aa)). Residues 161–338 (ADVGLVGFPS…LLDATAELLD (178 aa)) form the OBG-type G domain. Residues 167–174 (GFPSVGKS), 192–196 (FTTIV), 214–217 (DLPG), 284–287 (NKMD), and 319–321 (SSL) contribute to the GTP site. S174 and T194 together coordinate Mg(2+). The OCT domain occupies 358 to 436 (GFDEEAPAFE…IGKFEFEFVD (79 aa)).

It belongs to the TRAFAC class OBG-HflX-like GTPase superfamily. OBG GTPase family. Monomer. It depends on Mg(2+) as a cofactor.

Its subcellular location is the cytoplasm. Its function is as follows. An essential GTPase which binds GTP, GDP and possibly (p)ppGpp with moderate affinity, with high nucleotide exchange rates and a fairly low GTP hydrolysis rate. Plays a role in control of the cell cycle, stress response, ribosome biogenesis and in those bacteria that undergo differentiation, in morphogenesis control. The sequence is that of GTPase Obg from Streptococcus gordonii (strain Challis / ATCC 35105 / BCRC 15272 / CH1 / DL1 / V288).